The following is a 141-amino-acid chain: Hemoglobin subunit alpha (141 aa).

Positions 1-141 (VLSGDDKSNL…VSTVLTSKYR (141 aa)) constitute a Globin domain. Serine 3 carries the post-translational modification Phosphoserine. N6-succinyllysine occurs at positions 7 and 11. Lysine 16 bears the N6-acetyllysine; alternate mark. Lysine 16 is subject to N6-succinyllysine; alternate. Tyrosine 24 is modified (phosphotyrosine). Lysine 40 carries the N6-succinyllysine modification. Phosphoserine is present on serine 49. Histidine 58 serves as a coordination point for O2. Residue histidine 87 coordinates heme b. Phosphoserine is present on serine 102. Threonine 108 bears the Phosphothreonine mark. Phosphoserine is present on residues serine 124 and serine 131. A phosphothreonine mark is found at threonine 134 and threonine 137. Position 138 is a phosphoserine (serine 138).

It belongs to the globin family. As to quaternary structure, heterotetramer of two alpha chains and two beta chains. As to expression, red blood cells.

Involved in oxygen transport from the lung to the various peripheral tissues. The sequence is that of Hemoglobin subunit alpha from Microtus pennsylvanicus (Meadow vole).